Here is a 220-residue protein sequence, read N- to C-terminus: Uracil-DNA glycosylase (220 aa).

The active-site Proton acceptor is the Asp65.

It belongs to the uracil-DNA glycosylase (UDG) superfamily. UNG family.

The protein localises to the cytoplasm. The catalysed reaction is Hydrolyzes single-stranded DNA or mismatched double-stranded DNA and polynucleotides, releasing free uracil.. Excises uracil residues from the DNA which can arise as a result of misincorporation of dUMP residues by DNA polymerase or due to deamination of cytosine. The chain is Uracil-DNA glycosylase from Amoebophilus asiaticus (strain 5a2).